The sequence spans 364 residues: Melatonin receptor type 1B (364 aa).

Topologically, residues Met1 to Met42 are extracellular. Asn4 carries an N-linked (GlcNAc...) asparagine glycan. A helical membrane pass occupies residues Leu43–Leu63. The Cytoplasmic segment spans residues Ser64–Asn76. A helical transmembrane segment spans residues Leu77–Ile97. The Extracellular portion of the chain corresponds to Leu98–Ala115. A disulfide bridge links Cys113 with Cys190. A helical membrane pass occupies residues Ser116 to Ile136. Topologically, residues Asn137–Trp155 are cytoplasmic. A helical membrane pass occupies residues Tyr156–Phe176. The Extracellular segment spans residues Phe177 to Tyr200. A helical membrane pass occupies residues Thr201–Leu221. The Cytoplasmic segment spans residues Arg222–Met253. A helical membrane pass occupies residues Phe254–Val274. Residues Ala275 to Glu287 lie on the Extracellular side of the membrane. Residues Gly288–Tyr308 form a helical membrane-spanning segment. Topologically, residues Gly309 to Leu364 are cytoplasmic. Residues Glu343–Leu364 are disordered. Positions Ala352–Leu364 are enriched in low complexity.

It belongs to the G-protein coupled receptor 1 family.

The protein resides in the cell membrane. In terms of biological role, high affinity receptor for melatonin. The activity of this receptor is mediated by pertussis toxin sensitive G proteins that inhibits adenylate cyclase activity. The chain is Melatonin receptor type 1B (Mtnr1b) from Mus musculus (Mouse).